Consider the following 23-residue polypeptide: Magainin-B2 (23 aa).

Expressed by the skin glands.

It localises to the secreted. Has antimicrobial activity against Gram-negative bacterium E.coli ATCC 25922 (MIC=50 uM) and against fungus C.albicans ATCC 90028 (MIC=100 uM). Has no hemolytic activity against human erythrocytes even at high concentrations. The chain is Magainin-B2 from Xenopus borealis (Kenyan clawed frog).